Here is a 542-residue protein sequence, read N- to C-terminus: ATP synthase subunit beta (542 aa).

Low complexity predominate over residues 1 to 50 (MAKTPAKAPAAAAKPAAVKKPAAPKAAAAPKAAAVATPAAKKPAAPKAAP). A disordered region spans residues 1-61 (MAKTPAKAPA…SKVAGTREKP (61 aa)). 216–223 (GGAGVGKT) contacts ATP.

Belongs to the ATPase alpha/beta chains family. As to quaternary structure, F-type ATPases have 2 components, CF(1) - the catalytic core - and CF(0) - the membrane proton channel. CF(1) has five subunits: alpha(3), beta(3), gamma(1), delta(1), epsilon(1). CF(0) has three main subunits: a(1), b(2) and c(9-12). The alpha and beta chains form an alternating ring which encloses part of the gamma chain. CF(1) is attached to CF(0) by a central stalk formed by the gamma and epsilon chains, while a peripheral stalk is formed by the delta and b chains.

It is found in the cell inner membrane. The catalysed reaction is ATP + H2O + 4 H(+)(in) = ADP + phosphate + 5 H(+)(out). Functionally, produces ATP from ADP in the presence of a proton gradient across the membrane. The catalytic sites are hosted primarily by the beta subunits. This is ATP synthase subunit beta from Caulobacter sp. (strain K31).